We begin with the raw amino-acid sequence, 290 residues long: 4-hydroxy-tetrahydrodipicolinate synthase (290 aa).

Thr44 serves as a coordination point for pyruvate. The active-site Proton donor/acceptor is Tyr132. The active-site Schiff-base intermediate with substrate is the Lys160. Ile202 serves as a coordination point for pyruvate.

It belongs to the DapA family. In terms of assembly, homotetramer; dimer of dimers.

The protein resides in the cytoplasm. It carries out the reaction L-aspartate 4-semialdehyde + pyruvate = (2S,4S)-4-hydroxy-2,3,4,5-tetrahydrodipicolinate + H2O + H(+). It functions in the pathway amino-acid biosynthesis; L-lysine biosynthesis via DAP pathway; (S)-tetrahydrodipicolinate from L-aspartate: step 3/4. Its function is as follows. Catalyzes the condensation of (S)-aspartate-beta-semialdehyde [(S)-ASA] and pyruvate to 4-hydroxy-tetrahydrodipicolinate (HTPA). The polypeptide is 4-hydroxy-tetrahydrodipicolinate synthase (Geobacter sp. (strain M21)).